A 424-amino-acid polypeptide reads, in one-letter code: Protein CLP1 homolog (424 aa).

ATP is bound by residues glutamate 19, lysine 60, and 122-127 (DVGKST).

It belongs to the Clp1 family. Clp1 subfamily.

It is found in the nucleus. In terms of biological role, required for endonucleolytic cleavage during polyadenylation-dependent pre-mRNA 3'-end formation. The polypeptide is Protein CLP1 homolog (cbc) (Aedes aegypti (Yellowfever mosquito)).